A 194-amino-acid chain; its full sequence is Peptidyl-tRNA hydrolase (194 aa).

Tyr-17 is a tRNA binding site. The active-site Proton acceptor is His-22. The tRNA site is built by Phe-68, Asn-70, and Asn-116.

Belongs to the PTH family. As to quaternary structure, monomer.

The protein resides in the cytoplasm. It catalyses the reaction an N-acyl-L-alpha-aminoacyl-tRNA + H2O = an N-acyl-L-amino acid + a tRNA + H(+). Hydrolyzes ribosome-free peptidyl-tRNAs (with 1 or more amino acids incorporated), which drop off the ribosome during protein synthesis, or as a result of ribosome stalling. Its function is as follows. Catalyzes the release of premature peptidyl moieties from peptidyl-tRNA molecules trapped in stalled 50S ribosomal subunits, and thus maintains levels of free tRNAs and 50S ribosomes. This is Peptidyl-tRNA hydrolase from Actinobacillus succinogenes (strain ATCC 55618 / DSM 22257 / CCUG 43843 / 130Z).